Here is a 628-residue protein sequence, read N- to C-terminus: DNA mismatch repair protein MutL (628 aa).

Residues 350–402 are disordered; sequence GLPFDVSESQGNDNHINNGKSRETKSERELYERRPNPFENRLMKESNSPSVGK. The span at 356 to 368 shows a compositional bias: polar residues; sequence SESQGNDNHINNG. The segment covering 369-393 has biased composition (basic and acidic residues); that stretch reads KSRETKSERELYERRPNPFENRLMK.

This sequence belongs to the DNA mismatch repair MutL/HexB family.

Its function is as follows. This protein is involved in the repair of mismatches in DNA. It is required for dam-dependent methyl-directed DNA mismatch repair. May act as a 'molecular matchmaker', a protein that promotes the formation of a stable complex between two or more DNA-binding proteins in an ATP-dependent manner without itself being part of a final effector complex. The chain is DNA mismatch repair protein MutL from Wolbachia sp. subsp. Brugia malayi (strain TRS).